We begin with the raw amino-acid sequence, 294 residues long: Glycine--tRNA ligase alpha subunit (294 aa).

This sequence belongs to the class-II aminoacyl-tRNA synthetase family. As to quaternary structure, tetramer of two alpha and two beta subunits.

It localises to the cytoplasm. The enzyme catalyses tRNA(Gly) + glycine + ATP = glycyl-tRNA(Gly) + AMP + diphosphate. The sequence is that of Glycine--tRNA ligase alpha subunit from Nostoc sp. (strain PCC 7120 / SAG 25.82 / UTEX 2576).